The following is a 51-amino-acid chain: Large ribosomal subunit protein eL39 (51 aa).

Over residues 1–15 (MAAKKSFKIKQKLAK) the composition is skewed to basic residues. The tract at residues 1–21 (MAAKKSFKIKQKLAKAKNQNR) is disordered.

The protein belongs to the eukaryotic ribosomal protein eL39 family. As to quaternary structure, interacts with YIH1.

The protein is Large ribosomal subunit protein eL39 (RPL39) of Eremothecium gossypii (strain ATCC 10895 / CBS 109.51 / FGSC 9923 / NRRL Y-1056) (Yeast).